A 107-amino-acid chain; its full sequence is DNA-directed RNA polymerase subunit omega (107 aa).

The interval 81–107 (MEEEAAKGNADAGQGEGDAPKTPGQDG) is disordered.

The protein belongs to the RNA polymerase subunit omega family. As to quaternary structure, the RNAP catalytic core consists of 2 alpha, 1 beta, 1 beta' and 1 omega subunit. When a sigma factor is associated with the core the holoenzyme is formed, which can initiate transcription.

It catalyses the reaction RNA(n) + a ribonucleoside 5'-triphosphate = RNA(n+1) + diphosphate. Functionally, promotes RNA polymerase assembly. Latches the N- and C-terminal regions of the beta' subunit thereby facilitating its interaction with the beta and alpha subunits. This chain is DNA-directed RNA polymerase subunit omega, found in Alkalilimnicola ehrlichii (strain ATCC BAA-1101 / DSM 17681 / MLHE-1).